The sequence spans 87 residues: Large ribosomal subunit protein bL27 (87 aa).

It belongs to the bacterial ribosomal protein bL27 family.

The chain is Large ribosomal subunit protein bL27 from Stenotrophomonas maltophilia (strain K279a).